The following is an 85-amino-acid chain: MATKIRLARAGAKKRPFYQVVVADERSRRDGRFIENMGTYDPTKNPAVFKLNEEKILAWLSKGAQPTDTVRQLLKKAGILDKATA.

It belongs to the bacterial ribosomal protein bS16 family.

This Pelobacter propionicus (strain DSM 2379 / NBRC 103807 / OttBd1) protein is Small ribosomal subunit protein bS16.